We begin with the raw amino-acid sequence, 97 residues long: MNKLLIGLVNVYKKFISPILPPTCRYYPTCSSYMIDALKKHGAILGLIMGLARILRCNPFIKGGVDPVPDYFTLRRNPHPERYEDEIIAQAFHSNKK.

Belongs to the UPF0161 family.

The protein localises to the cell membrane. Functionally, could be involved in insertion of integral membrane proteins into the membrane. In Lactobacillus johnsonii (strain CNCM I-12250 / La1 / NCC 533), this protein is Putative membrane protein insertion efficiency factor.